The chain runs to 484 residues: Aldehyde dehydrogenase family 3 member H1 (484 aa).

Residue 196–201 participates in NAD(+) binding; it reads GSSKIG. The active-site Proton acceptor is the Glu-218. Cys-253 acts as the Nucleophile in catalysis.

The protein belongs to the aldehyde dehydrogenase family. In terms of assembly, homodimer and homomultimer. As to expression, isoform alpha is expressed in expanded leaves and flowers. Detected in seedlings. Isoform beta is mainly expressed in flowers. Detected in leaves and seedlings.

It catalyses the reaction an aldehyde + NAD(+) + H2O = a carboxylate + NADH + 2 H(+). With respect to regulation, thiol-based regulation. Inactivation after dimerization under oxidizing conditions. Functionally, involved in oxidative stress tolerance by detoxifying reactive aldehydes derived from lipid peroxidation. Medium- to long-chain saturated aldehydes are preferred substrates, while the short-chain aldehyde propanal is a weak substrate. Is strictely NAD(+) specific. The chain is Aldehyde dehydrogenase family 3 member H1 (ALDH3H1) from Arabidopsis thaliana (Mouse-ear cress).